Consider the following 838-residue polypeptide: Sec1 family domain-containing protein MIP3 (838 aa).

The disordered stretch occupies residues 637-677; the sequence is KSEETKEIPSDDQLDIDALDDDPWGKWGDEEEEEVDNSKAD. Residues 646-658 show a composition bias toward acidic residues; that stretch reads SDDQLDIDALDDD.

The protein belongs to the STXBP/unc-18/SEC1 family. As to quaternary structure, forms a complex with MAG2, ZW10/MIP1 and MIP2 on the endoplasmic reticulum.

It is found in the endoplasmic reticulum membrane. Functionally, required for proper maturation of seed storage proteins. Forms a complex with MAG2, ZW10/MIP1 and MIP2 on the endoplasmic reticulum that may be responsible for efficient transport of seed storage proteins. This Arabidopsis thaliana (Mouse-ear cress) protein is Sec1 family domain-containing protein MIP3.